The sequence spans 506 residues: Ribose import ATP-binding protein RbsA (506 aa).

ABC transporter domains are found at residues 5-241 and 254-498; these read LALT…VGRR and RDAA…TSDV. 37 to 44 contacts ATP; the sequence is GENGAGKS.

This sequence belongs to the ABC transporter superfamily. Ribose importer (TC 3.A.1.2.1) family. In terms of assembly, the complex is composed of an ATP-binding protein (RbsA), two transmembrane proteins (RbsC) and a solute-binding protein (RbsB).

It localises to the cell inner membrane. The enzyme catalyses D-ribose(out) + ATP + H2O = D-ribose(in) + ADP + phosphate + H(+). In terms of biological role, part of the ABC transporter complex RbsABC involved in ribose import. Responsible for energy coupling to the transport system. This Burkholderia mallei (strain ATCC 23344) protein is Ribose import ATP-binding protein RbsA.